An 87-amino-acid polypeptide reads, in one-letter code: Potassium channel toxin Ttr-beta-KTx (87 aa).

The N-terminal stretch at 1 to 19 (MERKWALLLFLGMVTLVSC) is a signal peptide. A propeptide spanning residues 20–27 (GLREKHVQ) is cleaved from the precursor. In terms of domain architecture, BetaSPN-type CS-alpha/beta spans 53–87 (QFGCPAYEGYCNNHCQDIKRKDGECHGFKCKCAKD). 3 disulfide bridges follow: cysteine 56/cysteine 77, cysteine 63/cysteine 82, and cysteine 67/cysteine 84.

This sequence belongs to the long chain scorpion toxin family. Class 1 subfamily. In terms of tissue distribution, expressed by the venom gland.

It localises to the secreted. In terms of biological role, inhibits voltage-gated potassium channel. The sequence is that of Potassium channel toxin Ttr-beta-KTx from Tityus trivittatus (Argentinean scorpion).